Consider the following 161-residue polypeptide: Phosphopantetheine adenylyltransferase (161 aa).

Residue serine 9 participates in substrate binding. Residues 9–10 (SF) and histidine 17 each bind ATP. Substrate is bound by residues lysine 41, leucine 73, and lysine 87. ATP contacts are provided by residues 88 to 90 (GLR), glutamate 98, and 122 to 128 (FSFLSSS).

This sequence belongs to the bacterial CoaD family. In terms of assembly, homohexamer. Requires Mg(2+) as cofactor.

It is found in the cytoplasm. The catalysed reaction is (R)-4'-phosphopantetheine + ATP + H(+) = 3'-dephospho-CoA + diphosphate. It functions in the pathway cofactor biosynthesis; coenzyme A biosynthesis; CoA from (R)-pantothenate: step 4/5. Reversibly transfers an adenylyl group from ATP to 4'-phosphopantetheine, yielding dephospho-CoA (dPCoA) and pyrophosphate. This Nocardia farcinica (strain IFM 10152) protein is Phosphopantetheine adenylyltransferase.